Reading from the N-terminus, the 662-residue chain is A-kinase anchor protein 10, mitochondrial (662 aa).

The N-terminal 28 residues, 1 to 28 (MRGAGPSPRQSPRTLRPDPGPAMSFFRR), are a transit peptide targeting the mitochondrion. Positions 1-55 (MRGAGPSPRQSPRTLRPDPGPAMSFFRRKVKGKEQEKTSDVKSIKASISVHSPQK) are disordered. A compositionally biased stretch (basic and acidic residues) spans 32–43 (GKEQEKTSDVKS). Residues serine 52 and serine 189 each carry the phosphoserine modification. RGS domains follow at residues 125-369 (TLEQ…CKYQ) and 379-505 (YLAD…YKYL). The span at 261–280 (SMETQESSSTLTVASRNSPA) shows a compositional bias: polar residues. The interval 261–282 (SMETQESSSTLTVASRNSPASP) is disordered. A Phosphoserine modification is found at serine 281. Residues 524–548 (LTAPGSVGPPDESHPGSSDSSASQS) form a disordered region. Residues 634 to 647 (LAWKIAKMIVSDIM) are PKA-RII subunit binding.

Its subcellular location is the mitochondrion. The protein localises to the membrane. The protein resides in the cytoplasm. In terms of biological role, differentially targeted protein that binds to type I and II regulatory subunits of protein kinase A and anchors them to the mitochondria or the plasma membrane. Although the physiological relevance between PKA and AKAPS with mitochondria is not fully understood, one idea is that BAD, a proapoptotic member, is phosphorylated and inactivated by mitochondria-anchored PKA. It cannot be excluded too that it may facilitate PKA as well as G protein signal transduction, by acting as an adapter for assembling multiprotein complexes. With its RGS domain, it could lead to the interaction to G-alpha proteins, providing a link between the signaling machinery and the downstream kinase. In Homo sapiens (Human), this protein is A-kinase anchor protein 10, mitochondrial (AKAP10).